Here is a 277-residue protein sequence, read N- to C-terminus: Large ribosomal subunit protein uL2 (277 aa).

Disordered stretches follow at residues 36-55 (PLPKRAGRNNQGKLTVRHHG) and 213-277 (WKGI…RKKK).

This sequence belongs to the universal ribosomal protein uL2 family. In terms of assembly, part of the 50S ribosomal subunit. Forms a bridge to the 30S subunit in the 70S ribosome.

One of the primary rRNA binding proteins. Required for association of the 30S and 50S subunits to form the 70S ribosome, for tRNA binding and peptide bond formation. It has been suggested to have peptidyltransferase activity; this is somewhat controversial. Makes several contacts with the 16S rRNA in the 70S ribosome. The sequence is that of Large ribosomal subunit protein uL2 from Staphylococcus saprophyticus subsp. saprophyticus (strain ATCC 15305 / DSM 20229 / NCIMB 8711 / NCTC 7292 / S-41).